The sequence spans 503 residues: Probable cytosol aminopeptidase (503 aa).

Positions 270 and 275 each coordinate Mn(2+). Lys-282 is a catalytic residue. Positions 293, 352, and 354 each coordinate Mn(2+). Arg-356 is a catalytic residue.

The protein belongs to the peptidase M17 family. Requires Mn(2+) as cofactor.

The protein resides in the cytoplasm. The catalysed reaction is Release of an N-terminal amino acid, Xaa-|-Yaa-, in which Xaa is preferably Leu, but may be other amino acids including Pro although not Arg or Lys, and Yaa may be Pro. Amino acid amides and methyl esters are also readily hydrolyzed, but rates on arylamides are exceedingly low.. The enzyme catalyses Release of an N-terminal amino acid, preferentially leucine, but not glutamic or aspartic acids.. Presumably involved in the processing and regular turnover of intracellular proteins. Catalyzes the removal of unsubstituted N-terminal amino acids from various peptides. The polypeptide is Probable cytosol aminopeptidase (Klebsiella pneumoniae (strain 342)).